Here is a 71-residue protein sequence, read N- to C-terminus: R-phycoerythrin gamma-1 chain, chloroplastic (71 aa).

The phycourobilin site is built by C25 and C34. A (2R,3E)-phycoerythrobilin-binding site is contributed by C49. Residue C58 coordinates phycourobilin.

Heteromer of 6 alpha, 6 beta and 1 gamma chains. In terms of processing, contains four covalently linked bilin chromophores.

It is found in the plastid. Its subcellular location is the chloroplast thylakoid membrane. Critical for the incorporation of phycoerythrin in the phycobilisome complex. In Gastroclonium coulteri (Red alga), this protein is R-phycoerythrin gamma-1 chain, chloroplastic.